Consider the following 564-residue polypeptide: Alpha-farnesene synthase (564 aa).

Mg(2+) contacts are provided by Asp313, Asp317, Thr464, and Glu468. Residues 313–317 carry the DDXXD motif motif; sequence DDVYD.

It belongs to the terpene synthase family. Mg(2+) serves as cofactor.

It carries out the reaction (2E,6E)-farnesyl diphosphate = (3E,6E)-alpha-farnesene + diphosphate. Catalyzes the cyclization of farnesyl diphosphate to (E,E)-alpha-farnesene. The chain is Alpha-farnesene synthase (TPS7) from Ricinus communis (Castor bean).